The sequence spans 285 residues: Protoheme IX farnesyltransferase (285 aa).

The next 9 membrane-spanning stretches (helical) occupy residues 13–33 (LGKLGVVSLLDLAAVAGAFLA), 40–60 (LLPIIPMFIGGTLASMGAMII), 89–109 (EAIIVGSLLAILGTALGFIDN), 110–130 (ILTAFFIALGVVIYIFVYTIL), 137–157 (LNIVIGGFAGSAAAWAGYTSL), 165–185 (GFLLGFLIFMWTPGHFWSLAL), 194–214 (AHYPMLPAVVGITTSARAIAI), 218–238 (LMIPIVLLLGYYINLIALIAF), and 265–285 (FIFSNIYLMLILLIMIIVKLI).

The protein belongs to the UbiA prenyltransferase family. Protoheme IX farnesyltransferase subfamily.

The protein resides in the cell membrane. The catalysed reaction is heme b + (2E,6E)-farnesyl diphosphate + H2O = Fe(II)-heme o + diphosphate. It functions in the pathway porphyrin-containing compound metabolism; heme O biosynthesis; heme O from protoheme: step 1/1. In terms of biological role, converts heme B (protoheme IX) to heme O by substitution of the vinyl group on carbon 2 of heme B porphyrin ring with a hydroxyethyl farnesyl side group. The chain is Protoheme IX farnesyltransferase from Saccharolobus islandicus (strain Y.G.57.14 / Yellowstone #1) (Sulfolobus islandicus).